The primary structure comprises 34 residues: Photosystem II reaction center protein M (34 aa).

Residues 5–25 form a helical membrane-spanning segment; sequence ILAFIATALFILVPTAFLLII.

This sequence belongs to the PsbM family. As to quaternary structure, PSII is composed of 1 copy each of membrane proteins PsbA, PsbB, PsbC, PsbD, PsbE, PsbF, PsbH, PsbI, PsbJ, PsbK, PsbL, PsbM, PsbT, PsbX, PsbY, PsbZ, Psb30/Ycf12, at least 3 peripheral proteins of the oxygen-evolving complex and a large number of cofactors. It forms dimeric complexes.

Its subcellular location is the plastid. The protein resides in the chloroplast thylakoid membrane. One of the components of the core complex of photosystem II (PSII). PSII is a light-driven water:plastoquinone oxidoreductase that uses light energy to abstract electrons from H(2)O, generating O(2) and a proton gradient subsequently used for ATP formation. It consists of a core antenna complex that captures photons, and an electron transfer chain that converts photonic excitation into a charge separation. This subunit is found at the monomer-monomer interface. In Phaseolus vulgaris (Kidney bean), this protein is Photosystem II reaction center protein M.